The primary structure comprises 248 residues: 5'-nucleotidase SurE (248 aa).

A divalent metal cation contacts are provided by Asp-8, Asp-9, Ser-39, and Asn-91.

It belongs to the SurE nucleotidase family. A divalent metal cation is required as a cofactor.

It is found in the cytoplasm. It carries out the reaction a ribonucleoside 5'-phosphate + H2O = a ribonucleoside + phosphate. Nucleotidase that shows phosphatase activity on nucleoside 5'-monophosphates. The chain is 5'-nucleotidase SurE from Geobacter sp. (strain M21).